An 87-amino-acid polypeptide reads, in one-letter code: MSERNQRKVYTGRVVSDKMDKTITVLVETYKTHSLYGKRVKYSKKYKAHDEQNQAKVGDIVKIMETRPLSATKRFRLVEIVEEAVII.

It belongs to the universal ribosomal protein uS17 family. Part of the 30S ribosomal subunit.

One of the primary rRNA binding proteins, it binds specifically to the 5'-end of 16S ribosomal RNA. This chain is Small ribosomal subunit protein uS17, found in Bacillus cytotoxicus (strain DSM 22905 / CIP 110041 / 391-98 / NVH 391-98).